A 324-amino-acid polypeptide reads, in one-letter code: DNA repair and recombination protein RadA (324 aa).

107–114 (GEFGSGKS) contributes to the ATP binding site.

The protein belongs to the eukaryotic RecA-like protein family.

Its function is as follows. Involved in DNA repair and in homologous recombination. Binds and assemble on single-stranded DNA to form a nucleoprotein filament. Hydrolyzes ATP in a ssDNA-dependent manner and promotes DNA strand exchange between homologous DNA molecules. The chain is DNA repair and recombination protein RadA from Methanoculleus marisnigri (strain ATCC 35101 / DSM 1498 / JR1).